The sequence spans 154 residues: uncharacterized protein (154 aa).

A run of 5 helical transmembrane segments spans residues 5–24 (TLII…GVLL), 29–48 (FYAA…IYAA), 53–75 (PVVV…AIAA), 87–109 (IFWV…SMAV), and 124–146 (ATDY…LSAI).

It is found in the cell membrane. This is an uncharacterized protein from Archaeoglobus fulgidus (strain ATCC 49558 / DSM 4304 / JCM 9628 / NBRC 100126 / VC-16).